We begin with the raw amino-acid sequence, 372 residues long: Chaperone protein DnaJ (372 aa).

One can recognise a J domain in the interval aspartate 5–glycine 70. The CR-type zinc finger occupies glycine 133–histidine 211. Zn(2+)-binding residues include cysteine 146, cysteine 149, cysteine 163, cysteine 166, cysteine 185, cysteine 188, cysteine 199, and cysteine 202. 4 CXXCXGXG motif repeats span residues cysteine 146–glycine 153, cysteine 163–glycine 170, cysteine 185–glycine 192, and cysteine 199–glycine 206.

The protein belongs to the DnaJ family. As to quaternary structure, homodimer. Requires Zn(2+) as cofactor.

It localises to the cytoplasm. Participates actively in the response to hyperosmotic and heat shock by preventing the aggregation of stress-denatured proteins and by disaggregating proteins, also in an autonomous, DnaK-independent fashion. Unfolded proteins bind initially to DnaJ; upon interaction with the DnaJ-bound protein, DnaK hydrolyzes its bound ATP, resulting in the formation of a stable complex. GrpE releases ADP from DnaK; ATP binding to DnaK triggers the release of the substrate protein, thus completing the reaction cycle. Several rounds of ATP-dependent interactions between DnaJ, DnaK and GrpE are required for fully efficient folding. Also involved, together with DnaK and GrpE, in the DNA replication of plasmids through activation of initiation proteins. This is Chaperone protein DnaJ from Thiobacillus denitrificans (strain ATCC 25259 / T1).